We begin with the raw amino-acid sequence, 79 residues long: RNA-binding protein Hfq (79 aa).

The region spanning 10-69 (DPFLNALRKEHVPVSIYLVNGIKLQGNIESFDQYVVLLRNTVTQMVYKHAISTVVPARPV) is the Sm domain.

This sequence belongs to the Hfq family. In terms of assembly, homohexamer.

Functionally, RNA chaperone that binds small regulatory RNA (sRNAs) and mRNAs to facilitate mRNA translational regulation in response to envelope stress, environmental stress and changes in metabolite concentrations. Also binds with high specificity to tRNAs. In Burkholderia mallei (strain ATCC 23344), this protein is RNA-binding protein Hfq.